The chain runs to 96 residues: NADH-ubiquinone oxidoreductase chain 4L (96 aa).

The next 3 membrane-spanning stretches (helical) occupy residues 1-21 (MPTT…SLQR), 27-47 (LLLT…LWAL), and 57-77 (APLI…SLMI).

This sequence belongs to the complex I subunit 4L family.

It is found in the mitochondrion membrane. It catalyses the reaction a ubiquinone + NADH + 5 H(+)(in) = a ubiquinol + NAD(+) + 4 H(+)(out). Core subunit of the mitochondrial membrane respiratory chain NADH dehydrogenase (Complex I) which catalyzes electron transfer from NADH through the respiratory chain, using ubiquinone as an electron acceptor. Part of the enzyme membrane arm which is embedded in the lipid bilayer and involved in proton translocation. In Petromyzon marinus (Sea lamprey), this protein is NADH-ubiquinone oxidoreductase chain 4L (MT-ND4L).